Reading from the N-terminus, the 155-residue chain is uncharacterized protein (155 aa).

In terms of domain architecture, HTH asnC-type spans 4–65; that stretch reads IDEVDEIILR…IIDHSFLGEF (62 aa). The segment at residues 23-42 is a DNA-binding region (H-T-H motif); that stretch reads LTELSRKVGLTPAAIKNRVE.

This is an uncharacterized protein from Pyrococcus furiosus (strain ATCC 43587 / DSM 3638 / JCM 8422 / Vc1).